A 243-amino-acid chain; its full sequence is Vesicle-associated membrane protein-associated protein B (243 aa).

A2 bears the N-acetylalanine mark. Residues 2–218 (AKVEQVLSLE…PASAMAGKEE (217 aa)) lie on the Cytoplasmic side of the membrane. Residues 7 to 124 (VLSLEPQHEL…MDSKLRCVFE (118 aa)) enclose the MSP domain. Phosphoserine is present on S146. K147 is covalently cross-linked (Glycyl lysine isopeptide (Lys-Gly) (interchain with G-Cter in SUMO1)). Phosphothreonine is present on T150. Phosphoserine is present on residues S158, S159, and S160. The stretch at 161–196 (LDDTEVKKVMEECKRLQSEVQRLREENKQFKEEDGL) forms a coiled coil. Over residues 186 to 197 (ENKQFKEEDGLR) the composition is skewed to basic and acidic residues. The disordered stretch occupies residues 186–214 (ENKQFKEEDGLRMRKTAQSNSPAPASAMA). S206 bears the Phosphoserine mark. The helical; Anchor for type IV membrane protein transmembrane segment at 219-239 (GLSTRLLALVVLFFIVGVIIG) threads the bilayer.

Belongs to the VAMP-associated protein (VAP) (TC 9.B.17) family. In terms of assembly, homodimer, and heterodimer with VAPA. Interacts with VAMP1 and VAMP2. Interacts (via MSP domain) with ZFYVE27. Interacts with RMDN3. Interacts with KIF5A in a ZFYVE27-dependent manner. Interacts (via MSP domain) with STARD3 (via phospho-FFAT motif). Interacts with STARD3NL (via FFAT motif). Interacts with CERT1. Interacts with PLEKHA3 and SACM1L to form a ternary complex. Interacts with VPS13A (via FFAT motif). Interacts with RB1CC1 (via phosphorylated FFAT motif), MIGA2 (via phosphorylated FFAT motif), RMDN3 (via phosphorylated FFAT motif), OSBPL1A (via FFAT motif), KCNB1 (via phosphorylated FFAT motif) and KCNB2 (via phosphorylated FFAT motif). Interacts (via MSP domain) with WDR44 (via FFAT motif); the interactions connect the endoplasmic reticulum (ER) with the endosomal tubule.

The protein localises to the endoplasmic reticulum membrane. Its function is as follows. Endoplasmic reticulum (ER)-anchored protein that mediates the formation of contact sites between the ER and endosomes via interaction with FFAT motif-containing proteins such as STARD3 or WDR44. Interacts with STARD3 in a FFAT motif phosphorylation dependent manner. Via interaction with WDR44 participates in neosynthesized protein export. Participates in the endoplasmic reticulum unfolded protein response (UPR) by inducing ERN1/IRE1 activity. Involved in cellular calcium homeostasis regulation. The protein is Vesicle-associated membrane protein-associated protein B of Bos taurus (Bovine).